Here is a 318-residue protein sequence, read N- to C-terminus: Biotin synthase (318 aa).

The region spanning 44–273 (LCGNKFDLCT…TVQIRLAGGR (230 aa)) is the Radical SAM core domain. [4Fe-4S] cluster-binding residues include Cys-62, Cys-66, and Cys-69. 4 residues coordinate [2Fe-2S] cluster: Ser-106, Cys-138, Cys-198, and Arg-268.

It belongs to the radical SAM superfamily. Biotin synthase family. Homodimer. The cofactor is [4Fe-4S] cluster. [2Fe-2S] cluster is required as a cofactor.

It carries out the reaction (4R,5S)-dethiobiotin + (sulfur carrier)-SH + 2 reduced [2Fe-2S]-[ferredoxin] + 2 S-adenosyl-L-methionine = (sulfur carrier)-H + biotin + 2 5'-deoxyadenosine + 2 L-methionine + 2 oxidized [2Fe-2S]-[ferredoxin]. Its pathway is cofactor biosynthesis; biotin biosynthesis; biotin from 7,8-diaminononanoate: step 2/2. Catalyzes the conversion of dethiobiotin (DTB) to biotin by the insertion of a sulfur atom into dethiobiotin via a radical-based mechanism. This Clostridium botulinum (strain Loch Maree / Type A3) protein is Biotin synthase.